The following is a 370-amino-acid chain: GTPase Obg (370 aa).

Residues Met-1–Leu-159 form the Obg domain. The OBG-type G domain occupies Ala-160–Ala-334. Residues Gly-166–Ser-173, Phe-191–Ala-195, Asp-213–Gly-216, Asn-284–Asp-287, and Ser-315–Leu-317 contribute to the GTP site. Mg(2+)-binding residues include Ser-173 and Thr-193. The segment at Glu-344 to Ala-370 is disordered.

It belongs to the TRAFAC class OBG-HflX-like GTPase superfamily. OBG GTPase family. As to quaternary structure, monomer. Requires Mg(2+) as cofactor.

Its subcellular location is the cytoplasm. An essential GTPase which binds GTP, GDP and possibly (p)ppGpp with moderate affinity, with high nucleotide exchange rates and a fairly low GTP hydrolysis rate. Plays a role in control of the cell cycle, stress response, ribosome biogenesis and in those bacteria that undergo differentiation, in morphogenesis control. This chain is GTPase Obg, found in Burkholderia ambifaria (strain ATCC BAA-244 / DSM 16087 / CCUG 44356 / LMG 19182 / AMMD) (Burkholderia cepacia (strain AMMD)).